Reading from the N-terminus, the 256-residue chain is Ribosomal RNA small subunit methyltransferase A (256 aa).

6 residues coordinate S-adenosyl-L-methionine: histidine 12, leucine 14, glycine 39, glutamate 60, aspartate 83, and asparagine 101.

Belongs to the class I-like SAM-binding methyltransferase superfamily. rRNA adenine N(6)-methyltransferase family. RsmA subfamily.

The protein localises to the cytoplasm. The enzyme catalyses adenosine(1518)/adenosine(1519) in 16S rRNA + 4 S-adenosyl-L-methionine = N(6)-dimethyladenosine(1518)/N(6)-dimethyladenosine(1519) in 16S rRNA + 4 S-adenosyl-L-homocysteine + 4 H(+). In terms of biological role, specifically dimethylates two adjacent adenosines (A1518 and A1519) in the loop of a conserved hairpin near the 3'-end of 16S rRNA in the 30S particle. May play a critical role in biogenesis of 30S subunits. The sequence is that of Ribosomal RNA small subunit methyltransferase A from Nitrosomonas eutropha (strain DSM 101675 / C91 / Nm57).